Reading from the N-terminus, the 748-residue chain is Acyl-coenzyme A oxidase (748 aa).

It belongs to the acyl-CoA oxidase family. It depends on FAD as a cofactor.

It localises to the peroxisome. The enzyme catalyses a 2,3-saturated acyl-CoA + O2 = a (2E)-enoyl-CoA + H2O2. It participates in lipid metabolism; peroxisomal fatty acid beta-oxidation. The polypeptide is Acyl-coenzyme A oxidase (POX1) (Candida glabrata (strain ATCC 2001 / BCRC 20586 / JCM 3761 / NBRC 0622 / NRRL Y-65 / CBS 138) (Yeast)).